Reading from the N-terminus, the 810-residue chain is Volume-regulated anion channel subunit LRRC8A (810 aa).

N-acetylmethionine is present on Met-1. Residues 1–22 are Cytoplasmic-facing; that stretch reads MIPVTELRYFADTQPAYRILKP. The chain crosses the membrane as a helical span at residues 23-47; that stretch reads WWDVFTDYISIVMLMIAVFGGTLQV. Over 48-123 the chain is Extracellular; sequence TQDKMICLPC…YENRLHWFAK (76 aa). Intrachain disulfides connect Cys-54-Cys-310, Cys-57-Cys-65, and Cys-113-Cys-295. Residues Asn-66 and Asn-83 are each glycosylated (N-linked (GlcNAc...) asparagine). A helical transmembrane segment spans residues 124 to 142; it reads YFPYLVLLHTLIFLACSNF. Topologically, residues 143–264 are cytoplasmic; the sequence is WFKFPRTSSK…EEGDIVYRLY (122 aa). Thr-200 bears the Phosphothreonine mark. A Phosphoserine modification is found at Ser-202. Thr-215 is modified (phosphothreonine). Ser-217 carries the phosphoserine modification. A helical transmembrane segment spans residues 265-286; the sequence is MRQTIIKVIKFFLIICYTVYYV. The Extracellular portion of the chain corresponds to 287 to 316; sequence HNIKFDVDCTVDIESLTGYRTYRCAHPLAT. The helical transmembrane segment at 317–341 threads the bilayer; sequence LFKILASFYISLVIFYGLICMYTLW. Residues 342-810 are Cytoplasmic-facing; sequence WMLRRSLKKY…RLWRADKEQA (469 aa). 17 LRR repeats span residues 399 to 422, 423 to 445, 447 to 468, 469 to 492, 493 to 515, 518 to 542, 543 to 565, 567 to 589, 590 to 613, 614 to 637, 639 to 661, 662 to 684, 686 to 707, 708 to 730, 732 to 753, 754 to 776, and 778 to 801; these read ENKL…RLTK, NAQD…VFDL, ELEV…IAQL, TGLK…AFLR, ENLR…IYSL, LEEL…GLRE, LKRL…VTDV, VHLQ…SLKK, MVNL…IFSL, HNLQ…SFQH, HRLT…IGNL, TNLE…LFYC, KLRY…IGLL, QNLQ…LFQC, KLRA…VGEL, TNLT…LGEC, and LLKR…VKER. The Di-leucine motif signature appears at 706–707; the sequence is LL.

The protein belongs to the LRRC8 family. In terms of assembly, heterohexamer; oligomerizes with other LRRC8 proteins (LRRC8B, LRRC8C, LRRC8D and/or LRRC8E) to form a heterohexamer. Can form homohexamers in vitro, but these have lower conductance than heterohexamers. Detected in a channel complex that contains LRRC8A, LRRC8C and LRRC8E. In vivo, the subunit composition may depend primarily on expression levels, and heterooligomeric channels containing various proportions of the different LRRC8 proteins may coexist. Interact with GRB2. Interacts with NOX4; this interaction prevents the ubiquitin-mediated degradation of LRRC8A. Post-translationally, N-glycosylated.

It is found in the cell membrane. The protein localises to the lysosome membrane. The enzyme catalyses chloride(in) = chloride(out). The catalysed reaction is iodide(out) = iodide(in). It carries out the reaction taurine(out) = taurine(in). It catalyses the reaction L-aspartate(out) = L-aspartate(in). The enzyme catalyses L-glutamate(out) = L-glutamate(in). The catalysed reaction is myo-inositol(out) = myo-inositol(in). It carries out the reaction 2',3'-cGAMP(out) = 2',3'-cGAMP(in). Its activity is regulated as follows. Inhibited by (4-[(2-butyl-6,7-dichloro-2-cyclopentyl-2,3-dihydro-1-oxo-1H-inden-5-yl)oxy]butanoic acid), which plugs the channel like a cork in a bottle by binding in the extracellular selectivity filter and sterically occluding ion conduction. Lipids may block conduction in closed heterohexameric channels. Essential component of the volume-regulated anion channel (VRAC, also named VSOAC channel), an anion channel required to maintain a constant cell volume in response to extracellular or intracellular osmotic changes. The VRAC channel conducts iodide better than chloride and can also conduct organic osmolytes like taurine. Mediates efflux of amino acids, such as aspartate and glutamate, in response to osmotic stress. In complex with LRRC8C or LRRC8E, acts as a transporter of immunoreactive cyclic dinucleotide GMP-AMP (2'-3'-cGAMP), an immune messenger produced in response to DNA virus in the cytosol: mediates both import and export of 2'-3'-cGAMP, thereby promoting transfer of 2'-3'-cGAMP to bystander cells. In contrast, complexes containing LRRC8D inhibit transport of 2'-3'-cGAMP. Required for in vivo channel activity, together with at least one other family member (LRRC8B, LRRC8C, LRRC8D or LRRC8E); channel characteristics depend on the precise subunit composition. Can form functional channels by itself (in vitro). Involved in B-cell development: required for the pro-B cell to pre-B cell transition. Also required for T-cell development. Required for myoblast differentiation: VRAC activity promotes membrane hyperpolarization and regulates insulin-stimulated glucose metabolism and oxygen consumption. Also acts as a regulator of glucose-sensing in pancreatic beta cells: VRAC currents, generated in response to hypotonicity- or glucose-induced beta cell swelling, depolarize cells, thereby causing electrical excitation, leading to increase glucose sensitivity and insulin secretion. Also plays a role in lysosome homeostasis by forming functional lysosomal VRAC channels in response to low cytoplasmic ionic strength condition: lysosomal VRAC channels are necessary for the formation of large lysosome-derived vacuoles, which store and then expel excess water to maintain cytosolic water homeostasis. Acts as a key factor in NLRP3 inflammasome activation by modulating itaconate efflux and mitochondria function. The chain is Volume-regulated anion channel subunit LRRC8A from Rattus norvegicus (Rat).